A 228-amino-acid polypeptide reads, in one-letter code: Phosphatidylglycerophosphate phosphatase PTPMT2 (228 aa).

Residues 1–10 (MTDETEEDDT) show a composition bias toward acidic residues. The interval 1 to 30 (MTDETEEDDTTQQRSSRNDGVSKNKGKGFK) is disordered. Residues Tyr48 and Asp126 each coordinate substrate. The 148-residue stretch at 66 to 213 (WWDQIDEYLL…VEEFSRLQSP (148 aa)) folds into the Tyrosine-protein phosphatase domain. Catalysis depends on Cys157, which acts as the Phosphocysteine intermediate. The Glucan phosphatase signature motif CXAGXGR motif lies at 157–163 (CKAGRGR). 158–163 (KAGRGR) is a substrate binding site.

It belongs to the protein-tyrosine phosphatase family. Non-receptor class dual specificity subfamily. Expressed in roots, leaves, stems and flowers. In terms of tissue distribution, expressed at low levels in stems and flowers.

The catalysed reaction is O-phospho-L-seryl-[protein] + H2O = L-seryl-[protein] + phosphate. It carries out the reaction O-phospho-L-threonyl-[protein] + H2O = L-threonyl-[protein] + phosphate. The enzyme catalyses O-phospho-L-tyrosyl-[protein] + H2O = L-tyrosyl-[protein] + phosphate. It catalyses the reaction a 1,2-diacyl-sn-glycero-3-phospho-(1'-sn-glycero-3'-phosphate) + H2O = a 1,2-diacyl-sn-glycero-3-phospho-(1'-sn-glycerol) + phosphate. The protein operates within phospholipid metabolism; phosphatidylglycerol biosynthesis; phosphatidylglycerol from CDP-diacylglycerol: step 2/2. Exhibits phosphatidylglycerophosphate phosphatase activity. Involved in root growth and columella cells organization. May possess protein phosphatase activity. This is Phosphatidylglycerophosphate phosphatase PTPMT2 from Arabidopsis thaliana (Mouse-ear cress).